A 1104-amino-acid chain; its full sequence is Lon protease homolog, mitochondrial (1104 aa).

The N-terminal 58 residues, 1–58 (MLPLRAFARLAQRPRLSRPTQLARSSLPRPSPSRPAAHYLALAPAPSTRFLHSSPPVL), are a transit peptide targeting the mitochondrion. The disordered stretch occupies residues 8-144 (ARLAQRPRLS…PGAGGPKEVA (137 aa)). Low complexity predominate over residues 22-46 (LARSSLPRPSPSRPAAHYLALAPAP). A compositionally biased stretch (basic and acidic residues) spans 80-103 (KQDDQVEKPLPDAESSKSAEERAK). A compositionally biased stretch (low complexity) spans 104-128 (SQSSKPDIKASSSDSVSSSAPAPGS). The segment covering 129–139 (ADGGSPPGAGG) has biased composition (gly residues). The Lon N-terminal domain maps to 155 to 444 (VLAIPITHRP…RALVLLKKEL (290 aa)). 597 to 604 (GPPGVGKT) contacts ATP. In terms of domain architecture, Lon proteolytic spans 895 to 1082 (SPPAGVSTGL…RQVLHEAFRG (188 aa)). Catalysis depends on residues Ser-987 and Lys-1030.

Belongs to the peptidase S16 family. As to quaternary structure, homohexamer or homoheptamer. Organized in a ring with a central cavity.

The protein resides in the mitochondrion matrix. The catalysed reaction is Hydrolysis of proteins in presence of ATP.. Its function is as follows. ATP-dependent serine protease that mediates the selective degradation of misfolded, unassembled or oxidatively damaged polypeptides as well as certain short-lived regulatory proteins in the mitochondrial matrix. May also have a chaperone function in the assembly of inner membrane protein complexes. Participates in the regulation of mitochondrial gene expression and in the maintenance of the integrity of the mitochondrial genome. Binds to mitochondrial DNA in a site-specific manner. The protein is Lon protease homolog, mitochondrial of Cryptococcus neoformans var. neoformans serotype D (strain B-3501A) (Filobasidiella neoformans).